The following is a 513-amino-acid chain: Cytochrome P450 4p1 (513 aa).

Residues glutamate 320 and cysteine 459 each contribute to the heme site.

It belongs to the cytochrome P450 family. Heme serves as cofactor.

Its subcellular location is the endoplasmic reticulum membrane. The protein resides in the microsome membrane. Its function is as follows. May be involved in the metabolism of insect hormones and in the breakdown of synthetic insecticides. In Drosophila melanogaster (Fruit fly), this protein is Cytochrome P450 4p1 (Cyp4p1).